The chain runs to 286 residues: Pantothenate synthetase (286 aa).

30–37 (MGNLHEGH) contributes to the ATP binding site. The active-site Proton donor is histidine 37. Position 61 (glutamine 61) interacts with (R)-pantoate. Position 61 (glutamine 61) interacts with beta-alanine. 149 to 152 (GRKD) serves as a coordination point for ATP. Residue glutamine 155 coordinates (R)-pantoate. Residues valine 178 and 186-189 (MSSR) contribute to the ATP site.

This sequence belongs to the pantothenate synthetase family. Homodimer.

The protein localises to the cytoplasm. It carries out the reaction (R)-pantoate + beta-alanine + ATP = (R)-pantothenate + AMP + diphosphate + H(+). Its pathway is cofactor biosynthesis; (R)-pantothenate biosynthesis; (R)-pantothenate from (R)-pantoate and beta-alanine: step 1/1. Catalyzes the condensation of pantoate with beta-alanine in an ATP-dependent reaction via a pantoyl-adenylate intermediate. In Alkalilimnicola ehrlichii (strain ATCC BAA-1101 / DSM 17681 / MLHE-1), this protein is Pantothenate synthetase.